The chain runs to 205 residues: CASP-like protein 2A1 (205 aa).

Residues 1–25 (MDKSKVSTAVGGETPVGLITGSRDD) form a disordered region. The Cytoplasmic segment spans residues 1-34 (MDKSKVSTAVGGETPVGLITGSRDDELESGSMRT). Residues 35-55 (AETVLRLVPMAFCISALVLML) form a helical membrane-spanning segment. The Extracellular portion of the chain corresponds to 56-76 (KNSQTNDFGTLSYSDLGAFRY). A helical transmembrane segment spans residues 77 to 97 (LVHANGICAGYSLLSAIIVAM). At 98–105 (PRPSTMSR) the chain is on the cytoplasmic side. Residues 106–126 (AWTFFFLDQVLTYVILAAAAV) traverse the membrane as a helical segment. Over 127-156 (SVEALYLARKGDIAITWSAACVSFGGFCHK) the chain is Extracellular. Residues 157–177 (AITSAVITFIVVVCYALLSLV) form a helical membrane-spanning segment. At 178 to 205 (SSYKLFSRYGAPDVSYPGKGIEVAAFHS) the chain is on the cytoplasmic side.

It belongs to the Casparian strip membrane proteins (CASP) family. As to quaternary structure, homodimer and heterodimers.

The protein resides in the cell membrane. This Ricinus communis (Castor bean) protein is CASP-like protein 2A1.